Here is a 508-residue protein sequence, read N- to C-terminus: Photosystem II CP47 reaction center protein (508 aa).

6 helical membrane passes run 21 to 36 (AVHLMHTALVSGWAGS), 101 to 115 (IVLSGLLFLAAIWHW), 140 to 156 (GIHLFLSGVLCFAFGAF), 203 to 218 (IAAGILGILAGLFHLS), 237 to 252 (VLSSSIAAVFFAAFVV), and 457 to 472 (TFALLFFFGHIWHGAR).

This sequence belongs to the PsbB/PsbC family. PsbB subfamily. As to quaternary structure, PSII is composed of 1 copy each of membrane proteins PsbA, PsbB, PsbC, PsbD, PsbE, PsbF, PsbH, PsbI, PsbJ, PsbK, PsbL, PsbM, PsbT, PsbX, PsbY, PsbZ, Psb30/Ycf12, at least 3 peripheral proteins of the oxygen-evolving complex and a large number of cofactors. It forms dimeric complexes. It depends on Binds multiple chlorophylls. PSII binds additional chlorophylls, carotenoids and specific lipids. as a cofactor.

Its subcellular location is the plastid. The protein localises to the chloroplast thylakoid membrane. Functionally, one of the components of the core complex of photosystem II (PSII). It binds chlorophyll and helps catalyze the primary light-induced photochemical processes of PSII. PSII is a light-driven water:plastoquinone oxidoreductase, using light energy to abstract electrons from H(2)O, generating O(2) and a proton gradient subsequently used for ATP formation. The sequence is that of Photosystem II CP47 reaction center protein from Marchantia polymorpha (Common liverwort).